A 491-amino-acid polypeptide reads, in one-letter code: Eupatolide synthase (491 aa).

A helical; Signal-anchor for type II membrane protein transmembrane segment spans residues 7–27 (LPSWLLPAVVILTISCILMLW). C430 contributes to the heme binding site.

The protein belongs to the cytochrome P450 family. Heme serves as cofactor. As to expression, expressed in leaf primordia.

It localises to the membrane. The catalysed reaction is 8beta-hydroxygermacra-1(10),4,11(13)-trien-12-oate + reduced [NADPH--hemoprotein reductase] + O2 = eupatolide + oxidized [NADPH--hemoprotein reductase] + 2 H2O. It participates in secondary metabolite biosynthesis; terpenoid biosynthesis. Functionally, involved in the biosynthesis of germacrene-derived sesquiterpene lactones. Hydroxylates 8-beta-hydroxy-germacrene A acid to 6-alpha,8-beta-hydroxy-germacrene A acid, which, in turn, undergo spontaneous lactonization to become eupatolide. This Helianthus annuus (Common sunflower) protein is Eupatolide synthase.